A 37-amino-acid chain; its full sequence is Potassium channel toxin alpha-KTx 1.4 (37 aa).

3 disulfides stabilise this stretch: cysteine 7–cysteine 28, cysteine 13–cysteine 33, and cysteine 17–cysteine 35.

The protein belongs to the short scorpion toxin superfamily. Potassium channel inhibitor family. Alpha-KTx 01 subfamily. Expressed by the venom gland.

It localises to the secreted. Functionally, blocks selectively the high conductance calcium-activated (maxi-K) potassium channels. The sequence is that of Potassium channel toxin alpha-KTx 1.4 from Centruroides limbatus (Bark scorpion).